The sequence spans 314 residues: tRNA dimethylallyltransferase (314 aa).

Position 10–17 (10–17 (GPTGVGKT)) interacts with ATP. 12–17 (TGVGKT) contacts substrate. Positions 35-38 (DSMQ) are interaction with substrate tRNA.

This sequence belongs to the IPP transferase family. As to quaternary structure, monomer. Requires Mg(2+) as cofactor.

It catalyses the reaction adenosine(37) in tRNA + dimethylallyl diphosphate = N(6)-dimethylallyladenosine(37) in tRNA + diphosphate. Functionally, catalyzes the transfer of a dimethylallyl group onto the adenine at position 37 in tRNAs that read codons beginning with uridine, leading to the formation of N6-(dimethylallyl)adenosine (i(6)A). This is tRNA dimethylallyltransferase from Finegoldia magna (strain ATCC 29328 / DSM 20472 / WAL 2508) (Peptostreptococcus magnus).